A 47-amino-acid chain; its full sequence is Potassium channel toxin gamma-KTx 5.2 (47 aa).

4 disulfides stabilise this stretch: Cys5/Cys23, Cys11/Cys34, Cys20/Cys39, and Cys24/Cys41.

Belongs to the ergtoxin family. Gamma-KTx 5 subfamily. In terms of tissue distribution, expressed by the venom gland.

Its subcellular location is the secreted. Reversibly blocks Kv11/ERG potassium channels. This is Potassium channel toxin gamma-KTx 5.2 from Centruroides gracilis (Slenderbrown scorpion).